Reading from the N-terminus, the 559-residue chain is Cytochrome P450 86B1 (559 aa).

Residues 31–51 form a helical membrane-spanning segment; the sequence is FLLRDVQILELLIAIFVFVAI. Position 488 (Cys488) interacts with heme.

It belongs to the cytochrome P450 family. The cofactor is heme. Expressed in roots endodermis, anthers, stigmas, stomata of young pedicels of inflorescences, the placenta region of siliques, at the level of the hilum in matures seeds, at the junction of siliques to pedicels where abscission of floral parts takes place and in nectary glands.

It localises to the endoplasmic reticulum membrane. Involved in very long chain fatty acids (VLCFA) omega-hydroxylation. Required for the synthesis of saturated VLCFA alpha, omega-bifunctional suberin monomers. The sequence is that of Cytochrome P450 86B1 (CYP86B1) from Arabidopsis thaliana (Mouse-ear cress).